The following is a 269-amino-acid chain: Formamidopyrimidine-DNA glycosylase (269 aa).

The active-site Schiff-base intermediate with DNA is the Pro-2. Glu-3 (proton donor) is an active-site residue. Lys-57 functions as the Proton donor; for beta-elimination activity in the catalytic mechanism. 3 residues coordinate DNA: His-90, Arg-109, and Lys-150. The segment at 235–269 (QVYGRKGEPCRVCGTPIVATKHAQRATFYCRQCQK) adopts an FPG-type zinc-finger fold. Arg-259 acts as the Proton donor; for delta-elimination activity in catalysis.

This sequence belongs to the FPG family. As to quaternary structure, monomer. It depends on Zn(2+) as a cofactor.

The catalysed reaction is Hydrolysis of DNA containing ring-opened 7-methylguanine residues, releasing 2,6-diamino-4-hydroxy-5-(N-methyl)formamidopyrimidine.. It carries out the reaction 2'-deoxyribonucleotide-(2'-deoxyribose 5'-phosphate)-2'-deoxyribonucleotide-DNA = a 3'-end 2'-deoxyribonucleotide-(2,3-dehydro-2,3-deoxyribose 5'-phosphate)-DNA + a 5'-end 5'-phospho-2'-deoxyribonucleoside-DNA + H(+). Involved in base excision repair of DNA damaged by oxidation or by mutagenic agents. Acts as a DNA glycosylase that recognizes and removes damaged bases. Has a preference for oxidized purines, such as 7,8-dihydro-8-oxoguanine (8-oxoG). Has AP (apurinic/apyrimidinic) lyase activity and introduces nicks in the DNA strand. Cleaves the DNA backbone by beta-delta elimination to generate a single-strand break at the site of the removed base with both 3'- and 5'-phosphates. This chain is Formamidopyrimidine-DNA glycosylase, found in Escherichia coli O6:K15:H31 (strain 536 / UPEC).